The sequence spans 473 residues: ATP synthase subunit beta (473 aa).

153 to 160 contacts ATP; that stretch reads GGAGVGKT.

Belongs to the ATPase alpha/beta chains family. As to quaternary structure, F-type ATPases have 2 components, CF(1) - the catalytic core - and CF(0) - the membrane proton channel. CF(1) has five subunits: alpha(3), beta(3), gamma(1), delta(1), epsilon(1). CF(0) has three main subunits: a(1), b(2) and c(9-12). The alpha and beta chains form an alternating ring which encloses part of the gamma chain. CF(1) is attached to CF(0) by a central stalk formed by the gamma and epsilon chains, while a peripheral stalk is formed by the delta and b chains.

It is found in the cell inner membrane. It carries out the reaction ATP + H2O + 4 H(+)(in) = ADP + phosphate + 5 H(+)(out). Produces ATP from ADP in the presence of a proton gradient across the membrane. The catalytic sites are hosted primarily by the beta subunits. This Rickettsia bellii (strain RML369-C) protein is ATP synthase subunit beta.